A 105-amino-acid chain; its full sequence is Nucleoid-associated protein ABO_1774 (105 aa).

A disordered region spans residues 85–105; that stretch reads QQQDSMQNMAGGFPFPPGFKP.

Belongs to the YbaB/EbfC family. Homodimer.

It localises to the cytoplasm. The protein localises to the nucleoid. Binds to DNA and alters its conformation. May be involved in regulation of gene expression, nucleoid organization and DNA protection. The polypeptide is Nucleoid-associated protein ABO_1774 (Alcanivorax borkumensis (strain ATCC 700651 / DSM 11573 / NCIMB 13689 / SK2)).